The following is a 146-amino-acid chain: 3-hydroxyacyl-[acyl-carrier-protein] dehydratase FabZ (146 aa).

Histidine 49 is a catalytic residue.

It belongs to the thioester dehydratase family. FabZ subfamily.

It localises to the cytoplasm. It carries out the reaction a (3R)-hydroxyacyl-[ACP] = a (2E)-enoyl-[ACP] + H2O. Its function is as follows. Involved in unsaturated fatty acids biosynthesis. Catalyzes the dehydration of short chain beta-hydroxyacyl-ACPs and long chain saturated and unsaturated beta-hydroxyacyl-ACPs. This Azotobacter vinelandii (strain DJ / ATCC BAA-1303) protein is 3-hydroxyacyl-[acyl-carrier-protein] dehydratase FabZ.